The sequence spans 301 residues: Syntaxin-17 (301 aa).

Residue Ser-2 is modified to N-acetylserine. Topologically, residues Ser-2–Lys-227 are cytoplasmic. N6-acetyllysine is present on Lys-41. A coiled-coil region spans residues Asp-49–Pro-128. Tyr-156 carries the post-translational modification Phosphotyrosine; by ABL1. The region spanning Ile-161–Ala-223 is the t-SNARE coiled-coil homology domain. The helical transmembrane segment at Leu-228 to Leu-248 threads the bilayer. The necessary and sufficient for localization to autophagosome stretch occupies residues Leu-228–Ile-274. Over Leu-249 to Lys-253 the chain is Lumenal. The chain crosses the membrane as a helical span at residues Val-254–Ile-274. The Cytoplasmic segment spans residues Gln-275–Ser-301. Ser-288 is modified (phosphoserine). An Endoplasmic reticulum retention signal motif is present at residues Lys-298 to Ser-301.

The protein belongs to the syntaxin family. Forms a SNARE complex composed of VAMP8, SNAP29 and STX17 involved in fusion of autophagosome with lysosome. May interact with VTI1B. Probably interacts with BET1, SCFD1 and SEC22B. Interacts with PTPN2 and ABL1; involved in STX17 phosphorylation. Interacts with COPB1. Interacts with TMED9 and TMED10; the interaction is direct. Interacts with VAMP7. Interacts with RUBCNL/PACER; promoting targeting of RUBCNL/PACER to autophagosome. Interacts with VAMP8, SNAP29, VPS39 and VPS41; these interactions are increased in the absence of TMEM39A. Interacts with IRGM; promoting STX17 recruitment to autophagosomes. Interacts with ATG8 proteins GABARAP and MAP1LC3B. Interacts with RNF115; this interaction enhances STX17 stability which in turn promotes autophagosome maturation. Interacts with RAB39A (GTP-bound); the interaction promotes autophagosome-lysosome membrane fusion driven by STX17-SNAP29-VAMP8. Interacts with RAB39B; the interaction may promote a different fonction in autophagy as compared with RAB39A. Dephosphorylation by PTPN2; regulates exit from the endoplasmic reticulum. Phosphorylated at Tyr-156 probably by ABL1.

It localises to the endoplasmic reticulum membrane. Its subcellular location is the smooth endoplasmic reticulum membrane. The protein resides in the endoplasmic reticulum-Golgi intermediate compartment membrane. The protein localises to the cytoplasmic vesicle. It is found in the autophagosome membrane. It localises to the COPII-coated vesicle membrane. Its subcellular location is the cytoplasm. The protein resides in the cytosol. The protein localises to the mitochondrion membrane. It is found in the autolysosome membrane. Functionally, SNAREs, soluble N-ethylmaleimide-sensitive factor-attachment protein receptors, are essential proteins for fusion of cellular membranes. SNAREs localized on opposing membranes assemble to form a trans-SNARE complex, an extended, parallel four alpha-helical bundle that drives membrane fusion. STX17 is a SNARE of the autophagosome involved in autophagy through the direct control of autophagosome membrane fusion with the lysosome membrane. May also play a role in the early secretory pathway where it may maintain the architecture of the endoplasmic reticulum-Golgi intermediate compartment/ERGIC and Golgi and/or regulate transport between the endoplasmic reticulum, the ERGIC and the Golgi. The polypeptide is Syntaxin-17 (Mus musculus (Mouse)).